The sequence spans 434 residues: Putative polysaccharide biosynthesis protein with aminopeptidase-like domain (434 aa).

Aminopeptidase-like stretches follow at residues 1–55 (MEEI…IHEV) and 57–355 (SGTK…IENN). The tract at residues 56 to 164 (KSGTKVFDWT…VVIDSSLEDG (109 aa)) is insert. Histidine 189, aspartate 195, and histidine 324 together coordinate Zn(2+). Residues 356-434 (RTYLNLNPKC…LYRVELLKLV (79 aa)) are permutated winged helix-turn-helix.

Belongs to the UPF0770 family. Homotrimer. The cofactor is Zn(2+).

The genomic context suggests a role in the biosynthesis of modified polysaccharides; this association with genes involved in carbohydrate metabolism is observed in several phylogenetically distinct taxa. Is not expected to have peptidase activity despite low similarity to aminopeptidases. The sequence is that of Putative polysaccharide biosynthesis protein with aminopeptidase-like domain from Clostridium acetobutylicum (strain ATCC 824 / DSM 792 / JCM 1419 / IAM 19013 / LMG 5710 / NBRC 13948 / NRRL B-527 / VKM B-1787 / 2291 / W).